We begin with the raw amino-acid sequence, 801 residues long: Mediator of RNA polymerase II transcription subunit 25 (801 aa).

3 stretches are compositionally biased toward low complexity: residues 647-676 (PQQL…QPGA), 687-710 (PQLR…QQPL), and 722-735 (PHQA…HQAP). The interval 647 to 735 (PQQLASQAPP…MGQQMQHQAP (89 aa)) is disordered. An LXXLL motif motif is present at residues 689-693 (LRNLL).

It belongs to the Mediator complex subunit 25 family. As to quaternary structure, component of the Mediator complex.

The protein localises to the nucleus. Its function is as follows. Component of the Mediator complex, a coactivator involved in the regulated transcription of nearly all RNA polymerase II-dependent genes. Mediator functions as a bridge to convey information from gene-specific regulatory proteins to the basal RNA polymerase II transcription machinery. Mediator is recruited to promoters by direct interactions with regulatory proteins and serves as a scaffold for the assembly of a functional preinitiation complex with RNA polymerase II and the general transcription factors. The polypeptide is Mediator of RNA polymerase II transcription subunit 25 (med25) (Xenopus laevis (African clawed frog)).